The chain runs to 638 residues: ATP-dependent zinc metalloprotease FtsH (638 aa).

Topologically, residues 1-4 (MNNQ) are cytoplasmic. The helical transmembrane segment at 5–25 (GKNIIVWAVIFVFVILLFNVF) threads the bilayer. The Periplasmic portion of the chain corresponds to 26–103 (QSDGLLSSKN…VVPPETRMNT (78 aa)). A helical membrane pass occupies residues 104-124 (FLSFLISWFPMLLLIGVWVFF). Topologically, residues 125-638 (MRQMHGGGKA…PIKAKKEDKS (514 aa)) are cytoplasmic. 195–202 (GPPGTGKT) serves as a coordination point for ATP. His417 serves as a coordination point for Zn(2+). Glu418 is an active-site residue. Zn(2+) is bound by residues His421 and Asp495. The interval 523 to 544 (SASEDMYTNRNSSSDRSESTSE) is disordered.

The protein in the central section; belongs to the AAA ATPase family. It in the C-terminal section; belongs to the peptidase M41 family. In terms of assembly, homohexamer. Requires Zn(2+) as cofactor.

It is found in the cell inner membrane. Acts as a processive, ATP-dependent zinc metallopeptidase for both cytoplasmic and membrane proteins. Plays a role in the quality control of integral membrane proteins. This is ATP-dependent zinc metalloprotease FtsH from Rickettsia bellii (strain RML369-C).